An 81-amino-acid polypeptide reads, in one-letter code: Small ribosomal subunit protein bS18 (81 aa).

The protein belongs to the bacterial ribosomal protein bS18 family. In terms of assembly, part of the 30S ribosomal subunit. Forms a tight heterodimer with protein bS6.

Functionally, binds as a heterodimer with protein bS6 to the central domain of the 16S rRNA, where it helps stabilize the platform of the 30S subunit. This is Small ribosomal subunit protein bS18 from Rubrobacter xylanophilus (strain DSM 9941 / JCM 11954 / NBRC 16129 / PRD-1).